The following is a 120-amino-acid chain: U13-lycotoxin-Ls1a (120 aa).

Positions 1–16 are cleaved as a signal peptide; it reads MKTLFVLISILYAVYC. Residues 17–54 constitute a propeptide that is removed on maturation; the sequence is FSSEEDVDSAYLANELEPVEDINSEQYAALEPKEEQER. 4 cysteine pairs are disulfide-bonded: Cys56-Cys70, Cys63-Cys76, Cys69-Cys87, and Cys78-Cys85. Residues 56–95 enclose the Agouti domain; it reads CADMGQDCKDDCDCCLNIATCNCWFGRYFCSCTFGDYQTC.

It belongs to the neurotoxin 05 (agouti) family. In terms of processing, contains 6 disulfide bonds. As to expression, expressed by the venom gland.

It localises to the secreted. This is U13-lycotoxin-Ls1a from Lycosa singoriensis (Wolf spider).